Consider the following 396-residue polypeptide: NADH-quinone oxidoreductase subunit D (396 aa).

This sequence belongs to the complex I 49 kDa subunit family. In terms of assembly, NDH-1 is composed of 14 different subunits. Subunits NuoB, C, D, E, F, and G constitute the peripheral sector of the complex.

The protein resides in the cell inner membrane. The enzyme catalyses a quinone + NADH + 5 H(+)(in) = a quinol + NAD(+) + 4 H(+)(out). NDH-1 shuttles electrons from NADH, via FMN and iron-sulfur (Fe-S) centers, to quinones in the respiratory chain. The immediate electron acceptor for the enzyme in this species is believed to be ubiquinone. Couples the redox reaction to proton translocation (for every two electrons transferred, four hydrogen ions are translocated across the cytoplasmic membrane), and thus conserves the redox energy in a proton gradient. This chain is NADH-quinone oxidoreductase subunit D, found in Rhodopseudomonas palustris (strain BisA53).